Consider the following 39-residue polypeptide: Cytochrome b6-f complex subunit 5 (39 aa).

A helical membrane pass occupies residues 5–25; sequence LLSGIVLGLVPVTILGLFVTA.

Belongs to the PetG family. As to quaternary structure, the 4 large subunits of the cytochrome b6-f complex are cytochrome b6, subunit IV (17 kDa polypeptide, PetD), cytochrome f and the Rieske protein, while the 4 small subunits are PetG, PetL, PetM and PetN. The complex functions as a dimer.

It is found in the plastid. The protein resides in the chloroplast thylakoid membrane. Its function is as follows. Component of the cytochrome b6-f complex, which mediates electron transfer between photosystem II (PSII) and photosystem I (PSI), cyclic electron flow around PSI, and state transitions. PetG is required for either the stability or assembly of the cytochrome b6-f complex. In Pleurastrum terricola (Filamentous green alga), this protein is Cytochrome b6-f complex subunit 5.